The chain runs to 341 residues: MDYQQAGVDIEAGRSFVKTIKDNVESTYRPGVLGGLGGFGGCFEIPAGYRQPVLISGTDGVGTKLKIAHQTDQHHTVGIDLVAMCVNDILTSGAEPLFFLDYLATGKLEPEQLAQVVAGIVEGCKQSGCALLGGETAEMPGFYQAGEYDLAGFCVGIVEKSEILDGSQVQVGDVAIALPSSGVHSNGFSLVRKIIEMNQLSWDDKPAAFQGKTLGEVFLTPTQIYVQAIQGALKAKMEIHGMAHITGGGLPENLPRCLQANQSMAIDPSTWEIPTLFQWLQTMGDVPQAAMWDTFNMGVGYVVIVPAPKAAENVAWFKAQGIAAWQVGTVVAGQGEVLGLQ.

This sequence belongs to the AIR synthase family.

Its subcellular location is the cytoplasm. It catalyses the reaction 2-formamido-N(1)-(5-O-phospho-beta-D-ribosyl)acetamidine + ATP = 5-amino-1-(5-phospho-beta-D-ribosyl)imidazole + ADP + phosphate + H(+). The protein operates within purine metabolism; IMP biosynthesis via de novo pathway; 5-amino-1-(5-phospho-D-ribosyl)imidazole from N(2)-formyl-N(1)-(5-phospho-D-ribosyl)glycinamide: step 2/2. This Picosynechococcus sp. (strain ATCC 27264 / PCC 7002 / PR-6) (Agmenellum quadruplicatum) protein is Phosphoribosylformylglycinamidine cyclo-ligase.